Here is a 727-residue protein sequence, read N- to C-terminus: Glucans biosynthesis glucosyltransferase H (727 aa).

The tract at residues 18 to 45 is disordered; it reads SAMPNERPGAMEPQSLTEMPEGFPRRST. 7 helical membrane-spanning segments follow: residues 58–78, 90–110, 278–298, 408–428, 460–480, 496–516, and 572–592; these read FFVVGGALLLSSFAIYEMGAV, LVLLLFAINFCWIALAFCSGI, LQQFAARIYGPVIGTGLGWWV, IMAYLSSPFWLLLILTGLMLA, LFYITMGVLFGPKIFGVLLLL, IFSVLFEVVLSALIAPIMMFI, and LLAWMSPALIGLWFAVPISAW.

The protein belongs to the glycosyltransferase 2 family. OpgH subfamily.

The protein localises to the cell inner membrane. The protein operates within glycan metabolism; osmoregulated periplasmic glucan (OPG) biosynthesis. Involved in the biosynthesis of osmoregulated periplasmic glucans (OPGs). This chain is Glucans biosynthesis glucosyltransferase H, found in Shewanella putrefaciens (strain CN-32 / ATCC BAA-453).